The primary structure comprises 430 residues: T-kininogen 1 (430 aa).

Positions 1 to 18 are cleaved as a signal peptide; that stretch reads MKLITILLLCSRLLPSLA. Residue Gln-19 is modified to Pyrrolidone carboxylic acid. The 104-residue stretch at 28–131 folds into the Cystatin kininogen-type 1 domain; sequence CNDETVFQAV…TQICNITPGK (104 aa). Disulfide bonds link Cys-28–Cys-404, Cys-83–Cys-94, Cys-107–Cys-125, Cys-141–Cys-144, Cys-205–Cys-217, Cys-228–Cys-247, Cys-263–Cys-266, Cys-327–Cys-339, and Cys-350–Cys-369. The N-linked (GlcNAc...) asparagine glycan is linked to Asn-82. The Cystatin kininogen-type 2 domain occupies 150–253; that stretch reads MDSSDLKPVL…SQSCDLYPGD (104 aa). N-linked (GlcNAc...) asparagine glycosylation is found at Asn-168 and Asn-204. Residues 272–375 form the Cystatin kininogen-type 3 domain; that stretch reads VDSPELKEAL…TVRCQALDMM (104 aa). Asn-326 carries N-linked (GlcNAc...) asparagine glycosylation. A disordered region spans residues 411–430; it reads SKARAGPAPDHQAEASTVTP.

In terms of processing, as T-kinin is preceded by a Met instead of an Arg or Lys, it is not released from its precursor by either tissue or plasma kallikrein. In terms of tissue distribution, plasma.

The protein resides in the secreted. The protein localises to the extracellular space. In terms of biological role, kininogens are plasma glycoproteins with a number of functions: (1) as precursor of the active peptide bradykinin they effect smooth muscle contraction, induction of hypotension and increase of vascular permeability. (2) They play a role in blood coagulation by helping to position optimally prekallikrein and factor XI next to factor XII. (3) They are inhibitor of thiol proteases. In Rattus norvegicus (Rat), this protein is T-kininogen 1 (Map1).